Consider the following 31-residue polypeptide: Fibrinogen beta chain (31 aa).

The segment covering 1–10 (HYYDDTDEEE) has biased composition (acidic residues). The segment at 1–31 (HYYDDTDEEERIVSTVDARGHRPLDKKREEA) is disordered. The residue at position 2 (Tyr-2) is a Sulfotyrosine; partial. Position 3 is a sulfotyrosine (Tyr-3). The span at 18 to 31 (ARGHRPLDKKREEA) shows a compositional bias: basic and acidic residues.

In terms of assembly, heterohexamer; disulfide linked. Contains 2 sets of 3 non-identical chains (alpha, beta and gamma). The 2 heterotrimers are in head to head conformation with the N-termini in a small central domain. Conversion of fibrinogen to fibrin is triggered by thrombin, which cleaves fibrinopeptides A and B from alpha and beta chains, and thus exposes the N-terminal polymerization sites responsible for the formation of the soft clot.

The protein resides in the secreted. Cleaved by the protease thrombin to yield monomers which, together with fibrinogen alpha (FGA) and fibrinogen gamma (FGG), polymerize to form an insoluble fibrin matrix. Fibrin has a major function in hemostasis as one of the primary components of blood clots. In addition, functions during the early stages of wound repair to stabilize the lesion and guide cell migration during re-epithelialization. Was originally thought to be essential for platelet aggregation, based on in vitro studies using anticoagulated blood. However subsequent studies have shown that it is not absolutely required for thrombus formation in vivo. Enhances expression of SELP in activated platelets. Maternal fibrinogen is essential for successful pregnancy. Fibrin deposition is also associated with infection, where it protects against IFNG-mediated hemorrhage. May also facilitate the antibacterial immune response via both innate and T-cell mediated pathways. In Canis lupus familiaris (Dog), this protein is Fibrinogen beta chain (FGB).